We begin with the raw amino-acid sequence, 906 residues long: Protein translocase subunit SecA (906 aa).

ATP-binding positions include glutamine 86, 104–108 (GEGKT), and aspartate 511. Composition is skewed to basic and acidic residues over residues 853–865 (HESV…RHDE) and 877–888 (VRREGPKVKRND). The tract at residues 853-906 (HESVIDNNQRHDEDEQEEAPKVQQVRREGPKVKRNDPCPCGSGKKYKQCHGKVE) is disordered. Positions 890, 892, 901, and 902 each coordinate Zn(2+). Residues 896–906 (KKYKQCHGKVE) show a composition bias toward basic residues.

This sequence belongs to the SecA family. Monomer and homodimer. Part of the essential Sec protein translocation apparatus which comprises SecA, SecYEG and auxiliary proteins SecDF-YajC and YidC. The cofactor is Zn(2+).

It localises to the cell inner membrane. It is found in the cytoplasm. It carries out the reaction ATP + H2O + cellular proteinSide 1 = ADP + phosphate + cellular proteinSide 2.. Functionally, part of the Sec protein translocase complex. Interacts with the SecYEG preprotein conducting channel. Has a central role in coupling the hydrolysis of ATP to the transfer of proteins into and across the cell membrane, serving both as a receptor for the preprotein-SecB complex and as an ATP-driven molecular motor driving the stepwise translocation of polypeptide chains across the membrane. The polypeptide is Protein translocase subunit SecA (Francisella tularensis subsp. holarctica (strain FTNF002-00 / FTA)).